The chain runs to 501 residues: Aldehyde dehydrogenase 1A1 (501 aa).

Serine 2 bears the N-acetylserine mark. Lysine 91 and lysine 128 each carry N6-acetyllysine. NAD(+)-binding positions include 167–170 (IPWN), 193–196 (KPAE), 226–227 (GP), and 246–247 (GS). Lysine 252 is subject to N6-acetyllysine. The active-site Proton acceptor is the glutamate 269. An NAD(+)-binding site is contributed by 269–271 (ELG). Cysteine 303 functions as the Nucleophile in the catalytic mechanism. The segment at 336 to 501 (LTPGVTQGPQ…VTVKISQKNS (166 aa)) is mediates interaction with PRMT3. Threonine 337 bears the Phosphothreonine mark. 349–353 (EQYDK) contacts NAD(+). Lysine 353 and lysine 367 each carry N6-acetyllysine. Position 400-402 (400-402 (EIF)) interacts with NAD(+). Lysine 410 carries the post-translational modification N6-acetyllysine. Serine 413 is subject to Phosphoserine. N6-acetyllysine occurs at positions 419, 435, and 495.

The protein belongs to the aldehyde dehydrogenase family. As to quaternary structure, homotetramer. Interacts with PRMT3; the interaction is direct, inhibits ALDH1A1 aldehyde dehydrogenase activity and is independent of the methyltransferase activity of PRMT3. In terms of processing, the N-terminus is blocked most probably by acetylation. Expressed by erythrocytes (at protein level).

Its subcellular location is the cytoplasm. It localises to the cytosol. The protein resides in the cell projection. The protein localises to the axon. The catalysed reaction is an aldehyde + NAD(+) + H2O = a carboxylate + NADH + 2 H(+). The enzyme catalyses all-trans-retinal + NAD(+) + H2O = all-trans-retinoate + NADH + 2 H(+). It carries out the reaction 9-cis-retinal + NAD(+) + H2O = 9-cis-retinoate + NADH + 2 H(+). It catalyses the reaction 11-cis-retinal + NAD(+) + H2O = 11-cis-retinoate + NADH + 2 H(+). The catalysed reaction is 13-cis-retinal + NAD(+) + H2O = 13-cis-retinoate + NADH + 2 H(+). The enzyme catalyses 3-deoxyglucosone + NAD(+) + H2O = 2-dehydro-3-deoxy-D-gluconate + NADH + 2 H(+). It carries out the reaction (E)-4-hydroxynon-2-enal + NAD(+) + H2O = (E)-4-hydroxynon-2-enoate + NADH + 2 H(+). It catalyses the reaction malonaldehyde + NAD(+) + H2O = 3-oxopropanoate + NADH + 2 H(+). The catalysed reaction is hexanal + NAD(+) + H2O = hexanoate + NADH + 2 H(+). The enzyme catalyses propanal + NAD(+) + H2O = propanoate + NADH + 2 H(+). It carries out the reaction acetaldehyde + NAD(+) + H2O = acetate + NADH + 2 H(+). It catalyses the reaction benzaldehyde + NAD(+) + H2O = benzoate + NADH + 2 H(+). The catalysed reaction is 4-aminobutanal + NAD(+) + H2O = 4-aminobutanoate + NADH + 2 H(+). It functions in the pathway cofactor metabolism; retinol metabolism. Its activity is regulated as follows. Inhibited by citral, disulfiram, and cyanamide. Activated by diethylstilbestrol. Inhibited by duocarmycin analogs. Functionally, cytosolic dehydrogenase that catalyzes the irreversible oxidation of a wide range of aldehydes to their corresponding carboxylic acid. Functions downstream of retinol dehydrogenases and catalyzes the oxidation of retinaldehyde into retinoic acid, the second step in the oxidation of retinol/vitamin A into retinoic acid. This pathway is crucial to control the levels of retinol and retinoic acid, two important molecules which excess can be teratogenic and cytotoxic. Also oxidizes aldehydes resulting from lipid peroxidation like (E)-4-hydroxynon-2-enal/HNE, malonaldehyde and hexanal that form protein adducts and are highly cytotoxic. By participating for instance to the clearance of (E)-4-hydroxynon-2-enal/HNE in the lens epithelium prevents the formation of HNE-protein adducts and lens opacification. Also functions downstream of fructosamine-3-kinase in the fructosamine degradation pathway by catalyzing the oxidation of 3-deoxyglucosone, the carbohydrate product of fructosamine 3-phosphate decomposition, which is itself a potent glycating agent that may react with lysine and arginine side-chains of proteins. Also has an aminobutyraldehyde dehydrogenase activity and is probably part of an alternative pathway for the biosynthesis of GABA/4-aminobutanoate in midbrain, thereby playing a role in GABAergic synaptic transmission. This chain is Aldehyde dehydrogenase 1A1, found in Homo sapiens (Human).